The following is a 968-amino-acid chain: RNA polymerase-associated protein RapA (968 aa).

One can recognise a Helicase ATP-binding domain in the interval 164–334; sequence DVGRRHAPRV…FARLRLLDPN (171 aa). Residue 177 to 184 participates in ATP binding; that stretch reads DEVGLGKT. Residues 280–283 carry the DEAH box motif; sequence DEAH. Positions 490 to 662 constitute a Helicase C-terminal domain; the sequence is RVEWLMGYLT…YLASPDQTEG (173 aa).

It belongs to the SNF2/RAD54 helicase family. RapA subfamily. Interacts with the RNAP. Has a higher affinity for the core RNAP than for the holoenzyme. Its ATPase activity is stimulated by binding to RNAP.

Its function is as follows. Transcription regulator that activates transcription by stimulating RNA polymerase (RNAP) recycling in case of stress conditions such as supercoiled DNA or high salt concentrations. Probably acts by releasing the RNAP, when it is trapped or immobilized on tightly supercoiled DNA. Does not activate transcription on linear DNA. Probably not involved in DNA repair. The chain is RNA polymerase-associated protein RapA from Escherichia coli (strain 55989 / EAEC).